A 287-amino-acid chain; its full sequence is CBK1 kinase activator protein MOB2 (287 aa).

Residues 1–89 (MSFFNFKAFG…QQQEASERSE (89 aa)) form a disordered region. Position 33 is a phosphotyrosine (Y33). The span at 34–44 (SSPHSSNSRLS) shows a compositional bias: low complexity. Basic residues predominate over residues 45–56 (LRNKHHSPKRHS). Position 59 is a phosphoserine (S59). Positions 63–83 (QKSTPQSQQLTSTTPQSQQQE) are enriched in low complexity. T76 bears the Phosphothreonine mark.

The protein belongs to the MOB1/phocein family. In terms of assembly, interacts with protein kinase CBK1 to form the RAM CBK1-MOB2 kinase complex.

The protein resides in the nucleus. The protein localises to the cytoplasm. Functions as an activator subunit for the CBK1 protein kinase. Part of the regulation of ACE2 activity and cellular morphogenesis (RAM) signaling network. Required for coordinating polarized cell growth during interphase with the onset of mitosis. Required for mother/daughter cell separation after cytokinesis. Also has a role in the prevention of nuclear export of ACE2 from the daughter cell nucleus after mitotic exit. It coordinates ACE2-dependent transcription with mitotic exit network activation. In Saccharomyces cerevisiae (strain ATCC 204508 / S288c) (Baker's yeast), this protein is CBK1 kinase activator protein MOB2 (MOB2).